A 197-amino-acid chain; its full sequence is Probable GTP-binding protein EngB (197 aa).

Positions 26-197 constitute an EngB-type G domain; sequence DLPEIALAGR…TSWDAILESL (172 aa). Residues 34 to 41, 61 to 65, 79 to 82, 146 to 149, and 178 to 180 each bind GTP; these read GRSNVGKS, GKTQS, DVPG, TKAD, and FSS. The Mg(2+) site is built by serine 41 and threonine 63.

Belongs to the TRAFAC class TrmE-Era-EngA-EngB-Septin-like GTPase superfamily. EngB GTPase family. Requires Mg(2+) as cofactor.

In terms of biological role, necessary for normal cell division and for the maintenance of normal septation. This Streptococcus mutans serotype c (strain ATCC 700610 / UA159) protein is Probable GTP-binding protein EngB.